A 492-amino-acid polypeptide reads, in one-letter code: Probable cobyric acid synthase (492 aa).

A GATase cobBQ-type domain is found at proline 252–phenylalanine 444. Cysteine 330 acts as the Nucleophile in catalysis. The active site involves histidine 436.

It belongs to the CobB/CobQ family. CobQ subfamily.

Its pathway is cofactor biosynthesis; adenosylcobalamin biosynthesis. In terms of biological role, catalyzes amidations at positions B, D, E, and G on adenosylcobyrinic A,C-diamide. NH(2) groups are provided by glutamine, and one molecule of ATP is hydrogenolyzed for each amidation. This chain is Probable cobyric acid synthase, found in Methanococcus maripaludis (strain C7 / ATCC BAA-1331).